The sequence spans 303 residues: 2-dehydropantoate 2-reductase (303 aa).

NADP(+) contacts are provided by residues 7–12 (GAGSLG), arginine 35, asparagine 103, alanine 129, and arginine 131. Position 103 (asparagine 103) interacts with substrate. Lysine 182 serves as the catalytic Proton donor. Substrate is bound by residues asparagine 186, asparagine 190, asparagine 200, and serine 250. Glutamate 262 contributes to the NADP(+) binding site.

This sequence belongs to the ketopantoate reductase family.

It is found in the cytoplasm. The catalysed reaction is (R)-pantoate + NADP(+) = 2-dehydropantoate + NADPH + H(+). The protein operates within cofactor biosynthesis; (R)-pantothenate biosynthesis; (R)-pantoate from 3-methyl-2-oxobutanoate: step 2/2. Functionally, catalyzes the NADPH-dependent reduction of ketopantoate into pantoic acid. The polypeptide is 2-dehydropantoate 2-reductase (panE) (Pseudomonas aeruginosa (strain ATCC 15692 / DSM 22644 / CIP 104116 / JCM 14847 / LMG 12228 / 1C / PRS 101 / PAO1)).